The primary structure comprises 246 residues: tRNA (guanine-N(7)-)-methyltransferase (246 aa).

Residues 1–26 are disordered; that stretch reads MSDSSSSSENAPATPESPGRPPRGIK. S-adenosyl-L-methionine contacts are provided by Glu-74, Glu-99, Asp-126, and Asp-149. Asp-149 is an active-site residue. Residues Lys-153, Asp-185, and 224–227 each bind substrate; that span reads TKFE.

The protein belongs to the class I-like SAM-binding methyltransferase superfamily. TrmB family.

It catalyses the reaction guanosine(46) in tRNA + S-adenosyl-L-methionine = N(7)-methylguanosine(46) in tRNA + S-adenosyl-L-homocysteine. It functions in the pathway tRNA modification; N(7)-methylguanine-tRNA biosynthesis. Functionally, catalyzes the formation of N(7)-methylguanine at position 46 (m7G46) in tRNA. The sequence is that of tRNA (guanine-N(7)-)-methyltransferase from Chromohalobacter salexigens (strain ATCC BAA-138 / DSM 3043 / CIP 106854 / NCIMB 13768 / 1H11).